The sequence spans 122 residues: MIQMQSTLEVACNSGARRVQCIKVLGGSHRRYAGIGDVIKVSVKEAIPRGKAKKGDVYNAVVVRTKKGVRRPDGSVIRFDRNAAVLLNANLAPIGTRIFGPVTRELRTEQFMKIVSLAPEVL.

This sequence belongs to the universal ribosomal protein uL14 family. In terms of assembly, part of the 50S ribosomal subunit. Forms a cluster with proteins L3 and L19. In the 70S ribosome, L14 and L19 interact and together make contacts with the 16S rRNA in bridges B5 and B8.

Its function is as follows. Binds to 23S rRNA. Forms part of two intersubunit bridges in the 70S ribosome. The protein is Large ribosomal subunit protein uL14 of Shewanella loihica (strain ATCC BAA-1088 / PV-4).